A 524-amino-acid polypeptide reads, in one-letter code: Cytochrome P450 1A1 (524 aa).

The mitochondrial targeting signal stretch occupies residues 33-44 (TRTWVPKGLKSP). A glycan (O-linked (GlcNAc) serine) is linked at Ser71. Residue Phe228 participates in substrate binding. A heme-binding site is contributed by Cys461.

The protein belongs to the cytochrome P450 family. In terms of assembly, both Cytochrome P450MT2A and Cytochrome P450MT2B interact with cytosolic chaperones HSP70 and HSP90; this interaction is required for initial targeting to mitochondria. P450MT2B interacts (via mitochondrial targeting signal) with TOMM40 (via N-terminus); this interaction is required for translocation across the mitochondrial outer membrane. Heme is required as a cofactor. In terms of processing, two forms; MT2A (long form) and MT2B (short form); are produced by NH2-terminal proteolytic cleavage. This cleavage activates a cryptic mitochondrial targeting signal. As to expression, liver.

Its subcellular location is the cytoplasm. It is found in the endoplasmic reticulum membrane. The protein resides in the mitochondrion inner membrane. The protein localises to the microsome membrane. The enzyme catalyses an organic molecule + reduced [NADPH--hemoprotein reductase] + O2 = an alcohol + oxidized [NADPH--hemoprotein reductase] + H2O + H(+). The catalysed reaction is estrone + reduced [NADPH--hemoprotein reductase] + O2 = 2-hydroxyestrone + oxidized [NADPH--hemoprotein reductase] + H2O + H(+). It catalyses the reaction estrone + reduced [NADPH--hemoprotein reductase] + O2 = 4-hydroxyestrone + oxidized [NADPH--hemoprotein reductase] + H2O + H(+). It carries out the reaction estrone + reduced [NADPH--hemoprotein reductase] + O2 = 6alpha-hydroxyestrone + oxidized [NADPH--hemoprotein reductase] + H2O + H(+). The enzyme catalyses estrone + reduced [NADPH--hemoprotein reductase] + O2 = 15alpha-hydroxyestrone + oxidized [NADPH--hemoprotein reductase] + H2O + H(+). The catalysed reaction is estrone + reduced [NADPH--hemoprotein reductase] + O2 = 16alpha-hydroxyestrone + oxidized [NADPH--hemoprotein reductase] + H2O + H(+). It catalyses the reaction 17beta-estradiol + reduced [NADPH--hemoprotein reductase] + O2 = 2-hydroxy-17beta-estradiol + oxidized [NADPH--hemoprotein reductase] + H2O + H(+). It carries out the reaction 17beta-estradiol + reduced [NADPH--hemoprotein reductase] + O2 = 4-hydroxy-17beta-estradiol + oxidized [NADPH--hemoprotein reductase] + H2O + H(+). The enzyme catalyses 17beta-estradiol + reduced [NADPH--hemoprotein reductase] + O2 = 6alpha-hydroxy-17beta-estradiol + oxidized [NADPH--hemoprotein reductase] + H2O + H(+). The catalysed reaction is 17beta-estradiol + reduced [NADPH--hemoprotein reductase] + O2 = 7alpha-hydroxy-17beta-estradiol + oxidized [NADPH--hemoprotein reductase] + H2O + H(+). It catalyses the reaction 17beta-estradiol + reduced [NADPH--hemoprotein reductase] + O2 = 15alpha-hydroxy-17beta-estradiol + oxidized [NADPH--hemoprotein reductase] + H2O + H(+). It carries out the reaction (5Z,8Z,11Z)-eicosatrienoate + reduced [NADPH--hemoprotein reductase] + O2 = 19-hydroxy-(5Z,8Z,11Z)-eicosatrienoate + oxidized [NADPH--hemoprotein reductase] + H2O + H(+). The enzyme catalyses (5Z,8Z,11Z,14Z)-eicosatetraenoate + reduced [NADPH--hemoprotein reductase] + O2 = 16-hydroxy-(5Z,8Z,11Z,14Z)-eicosatetraenoate + oxidized [NADPH--hemoprotein reductase] + H2O + H(+). The catalysed reaction is (5Z,8Z,11Z,14Z)-eicosatetraenoate + reduced [NADPH--hemoprotein reductase] + O2 = 17-hydroxy-(5Z,8Z,11Z,14Z)-eicosatetraenoate + oxidized [NADPH--hemoprotein reductase] + H2O + H(+). It catalyses the reaction (5Z,8Z,11Z,14Z)-eicosatetraenoate + reduced [NADPH--hemoprotein reductase] + O2 = 18-hydroxy-(5Z,8Z,11Z,14Z)-eicosatetraenoate + oxidized [NADPH--hemoprotein reductase] + H2O + H(+). It carries out the reaction (5Z,8Z,11Z,14Z)-eicosatetraenoate + reduced [NADPH--hemoprotein reductase] + O2 = 19-hydroxy-(5Z,8Z,11Z,14Z)-eicosatetraenoate + oxidized [NADPH--hemoprotein reductase] + H2O + H(+). The enzyme catalyses (5Z,8Z,11Z,14Z,17Z)-eicosapentaenoate + reduced [NADPH--hemoprotein reductase] + O2 = 19-hydroxy-(5Z,8Z,11Z,14Z,17Z)-eicosapentaenoate + oxidized [NADPH--hemoprotein reductase] + H2O + H(+). The catalysed reaction is (5Z,8Z,11Z,14Z)-eicosatetraenoate + reduced [NADPH--hemoprotein reductase] + O2 = (8R,9S)-epoxy-(5Z,11Z,14Z)-eicosatrienoate + oxidized [NADPH--hemoprotein reductase] + H2O + H(+). It catalyses the reaction (5Z,8Z,11Z,14Z)-eicosatetraenoate + reduced [NADPH--hemoprotein reductase] + O2 = (11R,12S)-epoxy-(5Z,8Z,14Z)-eicosatrienoate + oxidized [NADPH--hemoprotein reductase] + H2O + H(+). It carries out the reaction (5Z,8Z,11Z,14Z)-eicosatetraenoate + reduced [NADPH--hemoprotein reductase] + O2 = (11S,12R)-epoxy-(5Z,8Z,14Z)-eicosatrienoate + oxidized [NADPH--hemoprotein reductase] + H2O + H(+). The enzyme catalyses (5Z,8Z,11Z,14Z)-eicosatetraenoate + reduced [NADPH--hemoprotein reductase] + O2 = (14R,15S)-epoxy-(5Z,8Z,11Z)-eicosatrienoate + oxidized [NADPH--hemoprotein reductase] + H2O + H(+). The catalysed reaction is (5Z,8Z,11Z,14Z,17Z)-eicosapentaenoate + reduced [NADPH--hemoprotein reductase] + O2 = (17R,18S)-epoxy-(5Z,8Z,11Z,14Z)-eicosatetraenoate + oxidized [NADPH--hemoprotein reductase] + H2O + H(+). It catalyses the reaction (4Z,7Z,10Z,13Z,16Z,19Z)-docosahexaenoate + reduced [NADPH--hemoprotein reductase] + O2 = (19S,20R)-epoxy-(4Z,7Z,10Z,13Z,16Z)-docosapentaenoate + oxidized [NADPH--hemoprotein reductase] + H2O + H(+). It carries out the reaction (4Z,7Z,10Z,13Z,16Z,19Z)-docosahexaenoate + reduced [NADPH--hemoprotein reductase] + O2 = (19R,20S)-epoxy-(4Z,7Z,10Z,13Z,16Z)-docosapentaenoate + oxidized [NADPH--hemoprotein reductase] + H2O + H(+). The enzyme catalyses all-trans-retinol + reduced [NADPH--hemoprotein reductase] + O2 = all-trans-retinal + oxidized [NADPH--hemoprotein reductase] + 2 H2O + H(+). The catalysed reaction is all-trans-retinal + reduced [NADPH--hemoprotein reductase] + O2 = all-trans-retinoate + oxidized [NADPH--hemoprotein reductase] + H2O + 2 H(+). It catalyses the reaction (13S)-hydroperoxy-(9Z,11E)-octadecadienoate = 13-oxo-(9Z,11E)-octadecadienoate + H2O. It carries out the reaction (12S)-hydroperoxy-(5Z,8Z,10E,14Z)-eicosatetraenoate = 12-oxo-(5Z,8Z,10E,14Z)-eicosatetraenoate + H2O. The enzyme catalyses (15S)-hydroperoxy-(5Z,8Z,11Z,13E)-eicosatetraenoate = 15-oxo-(5Z,8Z,11Z,13E)-eicosatetraenoate + H2O. The catalysed reaction is (5S)-hydroperoxy-(6E,8Z,11Z,14Z)-eicosatetraenoate = 5-oxo-(6E,8Z,11Z,14Z)-eicosatetraenoate + H2O. Its pathway is steroid hormone biosynthesis. The protein operates within lipid metabolism; fatty acid metabolism. It functions in the pathway cofactor metabolism; retinol metabolism. A cytochrome P450 monooxygenase involved in the metabolism of various endogenous substrates, including fatty acids, steroid hormones and vitamins. Mechanistically, uses molecular oxygen inserting one oxygen atom into a substrate, and reducing the second into a water molecule, with two electrons provided by NADPH via cytochrome P450 reductase (CPR; NADPH-ferrihemoprotein reductase). Catalyzes the hydroxylation of carbon-hydrogen bonds. Exhibits high catalytic activity for the formation of hydroxyestrogens from estrone (E1) and 17beta-estradiol (E2), namely 2-hydroxy E1 and E2, as well as D-ring hydroxylated E1 and E2 at the C15alpha and C16alpha positions. Displays different regioselectivities for polyunsaturated fatty acids (PUFA) hydroxylation. Catalyzes the epoxidation of double bonds of certain PUFA. Converts arachidonic acid toward epoxyeicosatrienoic acid (EET) regioisomers, 8,9-, 11,12-, and 14,15-EET, that function as lipid mediators in the vascular system. Displays an absolute stereoselectivity in the epoxidation of eicosapentaenoic acid (EPA) producing the 17(R),18(S) enantiomer. May play an important role in all-trans retinoic acid biosynthesis in extrahepatic tissues. Catalyzes two successive oxidative transformation of all-trans retinol to all-trans retinal and then to the active form all-trans retinoic acid. May also participate in eicosanoids metabolism by converting hydroperoxide species into oxo metabolites (lipoxygenase-like reaction, NADPH-independent). The polypeptide is Cytochrome P450 1A1 (Rattus norvegicus (Rat)).